Here is a 164-residue protein sequence, read N- to C-terminus: Phosphopantetheine adenylyltransferase (164 aa).

Serine 11 is a binding site for substrate. Residues 11–12 (SF) and histidine 19 each bind ATP. Substrate-binding residues include lysine 43, alanine 76, and arginine 90. ATP is bound by residues 91-93 (GLR), glutamate 101, and 126-132 (YQHISSS).

The protein belongs to the bacterial CoaD family. As to quaternary structure, homohexamer. Requires Mg(2+) as cofactor.

Its subcellular location is the cytoplasm. The enzyme catalyses (R)-4'-phosphopantetheine + ATP + H(+) = 3'-dephospho-CoA + diphosphate. Its pathway is cofactor biosynthesis; coenzyme A biosynthesis; CoA from (R)-pantothenate: step 4/5. In terms of biological role, reversibly transfers an adenylyl group from ATP to 4'-phosphopantetheine, yielding dephospho-CoA (dPCoA) and pyrophosphate. The protein is Phosphopantetheine adenylyltransferase of Streptococcus gordonii (strain Challis / ATCC 35105 / BCRC 15272 / CH1 / DL1 / V288).